A 185-amino-acid chain; its full sequence is MNVSHPAVHPVGVPPALGGHAVPPRMRMRVRMEYLVFQGMPLPGTLGGLVLRLGQFCSALIAFSVMLSVRDFSVTAFCYLVAATVLQCLWSLAMAVIDVYALLVKRSLRNPLLVSIFVVGDGVTATLTFAAACASAGVIVLIGNDIAMCKDNPCANYEAAIIMAFLSWFMVSISFILTFWLLATL.

At 1 to 45 the chain is on the cytoplasmic side; it reads MNVSHPAVHPVGVPPALGGHAVPPRMRMRVRMEYLVFQGMPLPGT. The chain crosses the membrane as a helical span at residues 46 to 66; sequence LGGLVLRLGQFCSALIAFSVM. At 67-76 the chain is on the extracellular side; it reads LSVRDFSVTA. The chain crosses the membrane as a helical span at residues 77 to 97; the sequence is FCYLVAATVLQCLWSLAMAVI. Over 98–121 the chain is Cytoplasmic; it reads DVYALLVKRSLRNPLLVSIFVVGD. The helical transmembrane segment at 122–142 threads the bilayer; that stretch reads GVTATLTFAAACASAGVIVLI. The Extracellular segment spans residues 143-160; that stretch reads GNDIAMCKDNPCANYEAA. A helical transmembrane segment spans residues 161–181; the sequence is IIMAFLSWFMVSISFILTFWL. Residues 182–185 are Cytoplasmic-facing; the sequence is LATL.

Belongs to the Casparian strip membrane proteins (CASP) family. Homodimer and heterodimers.

The protein resides in the cell membrane. In Picea sitchensis (Sitka spruce), this protein is CASP-like protein 5A1.